Here is a 256-residue protein sequence, read N- to C-terminus: MREETYYSVRMRASRNAPHEQGGKHISGGERLITYSGLQEAVDGLLHKGFSHSRGIPDFMQIQLESINEPIETIRPLPVAFHQSDTPEKGQAIARKLLQKAGIPPHMIEKAYENIAEYAEARGAVLFDIRAGERIDGRGNRGVRVSRMDWPSHDFQKWAFTHNMPENSRIKEAHAIAAKVCAHPGIIAELCWSDDPDYITGYVAAKKLGYQRIAKMKNAGDESGCRIFFTDGSIDTESCIHFLEKQPVFIQREENI.

It belongs to the BioW family. As to quaternary structure, homodimer. It depends on Mg(2+) as a cofactor.

It catalyses the reaction heptanedioate + ATP + CoA = 6-carboxyhexanoyl-CoA + AMP + diphosphate. The protein operates within metabolic intermediate metabolism; pimeloyl-CoA biosynthesis; pimeloyl-CoA from pimelate: step 1/1. Catalyzes the transformation of pimelate into pimeloyl-CoA with concomitant hydrolysis of ATP to AMP. The chain is 6-carboxyhexanoate--CoA ligase from Bacillus velezensis (strain DSM 23117 / BGSC 10A6 / LMG 26770 / FZB42) (Bacillus amyloliquefaciens subsp. plantarum).